Here is a 360-residue protein sequence, read N- to C-terminus: Peptide chain release factor 1 (360 aa).

Q236 is subject to N5-methylglutamine.

It belongs to the prokaryotic/mitochondrial release factor family. Methylated by PrmC. Methylation increases the termination efficiency of RF1.

The protein resides in the cytoplasm. Its function is as follows. Peptide chain release factor 1 directs the termination of translation in response to the peptide chain termination codons UAG and UAA. The polypeptide is Peptide chain release factor 1 (Limosilactobacillus fermentum (strain NBRC 3956 / LMG 18251) (Lactobacillus fermentum)).